Reading from the N-terminus, the 864-residue chain is MLGSIVKKVFGSKNDRYLKSLNHYLKEINALEENIATMPDEAISARMAELRAEVQQGTSLDSILPEVFAMVREAGKRVLGMRHYDVQMVGGIALHSGKIAEMRTGEGKTLVATLPAALNALTGKGVHLITVNDYLARRDAEWMGKIYNFLGLSVGVIVHGLNDEERRAAYASDITYGTNNEFGFDYLRDNMKFYKEQLVQRPHHFAIVDEVDSILIDEARTPLIISGPSDESTGLYRRVNDIIPRLKRDTHYTVDEKARAAALTDEGVQEAEKLLGLDNLYDPQNISFQHHILQALKAHSIFTRDVDYIVKDDQVVIVDEFTGRLMPGRRFSDGLHQALEAKEGVKVEAENQTLASITFQNYFRMYEKLSGMTGTADTEAVEFQQIYDLEVVNIPTNKPMIRKDQPDSIYRTRPEKFNAIVEEIARLHHKGQPVLVGTISIETSELIAGMLKKKGVPHNVLNAKQHEKEAEIVAEAGQAGKVTIATNMAGRGTDIVLGEGVPQLGGLYILGTERHESRRIDNQLRGRSGRQGDPGETRFFLSLEDDLLRLFGSDRIAGLMERLGMQEGEPIENKMVSRAIENAQKRVEGHNFEIRKTLLDYDNVMNQQREVIYSLRRDTMMEDDLEPSVHEFLDDIIEDIYAPLEQTKGKALDEETHAAIAARLEETFFLSRVYPEFALKGSEQQEKLPELPSAADVKKAVESMLEKLKRDAGPVYGDILRYFLLEELDRNWKEHLLNMDHLRDGIGLRGYGQRDPKQEYKREGFSLFQNMLWSIKESVFRALTRLRLQRVEEAADPAEQPEAAGLQEAKATELRHKEQPAELSYSGGDEDGAKTPSRRNAPKVGRNDPCPCGSGKKYKKCCGA.

ATP is bound by residues Gln87, 105-109 (GEGKT), and Asp494. The disordered stretch occupies residues 809 to 864 (AKATELRHKEQPAELSYSGGDEDGAKTPSRRNAPKVGRNDPCPCGSGKKYKKCCGA). A compositionally biased stretch (basic and acidic residues) spans 810 to 820 (KATELRHKEQP). Residues Cys850, Cys852, Cys861, and Cys862 each contribute to the Zn(2+) site.

The protein belongs to the SecA family. In terms of assembly, monomer and homodimer. Part of the essential Sec protein translocation apparatus which comprises SecA, SecYEG and auxiliary proteins SecDF-YajC and YidC. Zn(2+) serves as cofactor.

Its subcellular location is the cell inner membrane. It is found in the cytoplasm. It carries out the reaction ATP + H2O + cellular proteinSide 1 = ADP + phosphate + cellular proteinSide 2.. Its function is as follows. Part of the Sec protein translocase complex. Interacts with the SecYEG preprotein conducting channel. Has a central role in coupling the hydrolysis of ATP to the transfer of proteins into and across the cell membrane, serving as an ATP-driven molecular motor driving the stepwise translocation of polypeptide chains across the membrane. The chain is Protein translocase subunit SecA from Oleidesulfovibrio alaskensis (strain ATCC BAA-1058 / DSM 17464 / G20) (Desulfovibrio alaskensis).